Here is a 549-residue protein sequence, read N- to C-terminus: Cation/acetate symporter ActP (549 aa).

The next 13 helical transmembrane spans lie at 33–53, 77–97, 103–123, 148–168, 183–203, 206–226, 262–282, 303–323, 355–375, 404–424, 428–448, 464–484, and 493–513; these read WQAI…TYWA, LAIA…ALVF, GLIY…LIAE, ILSA…QMVG, IAVV…GMLA, WVQI…AFMV, ISAL…PHIL, GFMG…IMLV, LFLG…VAGL, VSKI…VLFE, IAFM…PIIL, GGWL…TIWV, and IFPY…GIWF.

The protein belongs to the sodium:solute symporter (SSF) (TC 2.A.21) family.

The protein localises to the cell inner membrane. Functionally, transports acetate. This is Cation/acetate symporter ActP from Escherichia coli (strain ATCC 8739 / DSM 1576 / NBRC 3972 / NCIMB 8545 / WDCM 00012 / Crooks).